Here is a 397-residue protein sequence, read N- to C-terminus: Elongation factor Tu (397 aa).

The 198-residue stretch at 10-207 (LPHVNVGTIG…TLDSYIPEPV (198 aa)) folds into the tr-type G domain. Residues 19 to 26 (GHVDHGKT) are G1. A GTP-binding site is contributed by 19 to 26 (GHVDHGKT). Thr-26 serves as a coordination point for Mg(2+). The G2 stretch occupies residues 60–64 (GITIN). The interval 81–84 (DCPG) is G3. GTP-binding positions include 81-85 (DCPGH) and 136-139 (NKAD). The G4 stretch occupies residues 136 to 139 (NKAD). Positions 174–176 (SAR) are G5.

The protein belongs to the TRAFAC class translation factor GTPase superfamily. Classic translation factor GTPase family. EF-Tu/EF-1A subfamily. As to quaternary structure, monomer.

It localises to the cytoplasm. It catalyses the reaction GTP + H2O = GDP + phosphate + H(+). In terms of biological role, GTP hydrolase that promotes the GTP-dependent binding of aminoacyl-tRNA to the A-site of ribosomes during protein biosynthesis. The sequence is that of Elongation factor Tu from Pseudomonas syringae pv. syringae (strain B728a).